The following is a 1399-amino-acid chain: DNA-directed RNA polymerase subunit beta' (1399 aa).

Positions 70, 72, 85, and 88 each coordinate Zn(2+). Residues aspartate 460, aspartate 462, and aspartate 464 each coordinate Mg(2+). Zn(2+) is bound by residues cysteine 814, cysteine 888, cysteine 895, and cysteine 898.

The protein belongs to the RNA polymerase beta' chain family. In terms of assembly, the RNAP catalytic core consists of 2 alpha, 1 beta, 1 beta' and 1 omega subunit. When a sigma factor is associated with the core the holoenzyme is formed, which can initiate transcription. Requires Mg(2+) as cofactor. Zn(2+) is required as a cofactor.

The catalysed reaction is RNA(n) + a ribonucleoside 5'-triphosphate = RNA(n+1) + diphosphate. Functionally, DNA-dependent RNA polymerase catalyzes the transcription of DNA into RNA using the four ribonucleoside triphosphates as substrates. This is DNA-directed RNA polymerase subunit beta' from Pseudomonas fluorescens (strain Pf0-1).